Consider the following 313-residue polypeptide: Ribosomal RNA small subunit methyltransferase H (313 aa).

S-adenosyl-L-methionine-binding positions include Gly35 to His37, Asp55, Phe79, Asp101, and Gln108.

This sequence belongs to the methyltransferase superfamily. RsmH family.

The protein localises to the cytoplasm. The catalysed reaction is cytidine(1402) in 16S rRNA + S-adenosyl-L-methionine = N(4)-methylcytidine(1402) in 16S rRNA + S-adenosyl-L-homocysteine + H(+). In terms of biological role, specifically methylates the N4 position of cytidine in position 1402 (C1402) of 16S rRNA. The sequence is that of Ribosomal RNA small subunit methyltransferase H from Shigella sonnei (strain Ss046).